The sequence spans 331 residues: Autoinducer 2 import system permease protein LsrD (331 aa).

10 helical membrane-spanning segments follow: residues 7-27 (YGWE…FGLS), 45-65 (ICIG…GIDI), 67-87 (FGST…AGVP), 90-110 (IAIP…AGLI), 118-138 (LVIT…LSGI), 162-182 (LLGL…FWLL), 212-232 (TLCL…VLLV), 240-260 (SDLG…GGAN), 261-281 (IYGG…VGYL), and 288-308 (IGTP…LVVV).

It belongs to the binding-protein-dependent transport system permease family. AraH/RbsC subfamily. In terms of assembly, the complex is composed of two ATP-binding proteins (LsrA), two transmembrane proteins (LsrC and LsrD) and a solute-binding protein (LsrB).

It is found in the cell inner membrane. Its function is as follows. Part of the ABC transporter complex LsrABCD involved in autoinducer 2 (AI-2) import. Probably responsible for the translocation of the substrate across the membrane. This chain is Autoinducer 2 import system permease protein LsrD (lsrD), found in Yersinia enterocolitica serotype O:8 / biotype 1B (strain NCTC 13174 / 8081).